The sequence spans 210 residues: Large ribosomal subunit protein uL4 (210 aa).

Positions 57 to 78 (VSGGGAKPWKQKGTGRARAGSN) are disordered.

It belongs to the universal ribosomal protein uL4 family. Part of the 50S ribosomal subunit.

In terms of biological role, one of the primary rRNA binding proteins, this protein initially binds near the 5'-end of the 23S rRNA. It is important during the early stages of 50S assembly. It makes multiple contacts with different domains of the 23S rRNA in the assembled 50S subunit and ribosome. Forms part of the polypeptide exit tunnel. This is Large ribosomal subunit protein uL4 from Desulfovibrio desulfuricans (strain ATCC 27774 / DSM 6949 / MB).